Reading from the N-terminus, the 556-residue chain is Sesquiterpene synthase 2 (556 aa).

Mg(2+) contacts are provided by aspartate 309, aspartate 313, aspartate 453, and glutamate 461. The DDXXD motif motif lies at 309–313 (DDIYD).

This sequence belongs to the terpene synthase family. Tpsa subfamily. The cofactor is Mg(2+). Requires Mn(2+) as cofactor. In terms of tissue distribution, mostly expressed in roots and mature leaflets and, to a lower extent, in rachis and developing leaflets.

It carries out the reaction (2E,6E)-farnesyl diphosphate = alpha-humulene + diphosphate. The enzyme catalyses (2E,6E)-farnesyl diphosphate = alpha-selinene + diphosphate. The catalysed reaction is (2E,6E)-farnesyl diphosphate = delta-cadinene + diphosphate. It catalyses the reaction (2E,6E)-farnesyl diphosphate = (1S,2S,4R)-beta-elemene + diphosphate. It participates in secondary metabolite biosynthesis; terpenoid biosynthesis. Its function is as follows. Sesquiterpene synthase involved in the biosynthesis of volatile compounds known for their medicinal efficacy for treating enteritis, dysentery, itch and some cancers. Mediates the conversion of (2E,6E)-farnesyl diphosphate (FPP) into beta-elemene, alpha-humulene, delta-cadinene and alpha-selinene. This chain is Sesquiterpene synthase 2, found in Toona sinensis (Chinese mahogany).